Here is a 484-residue protein sequence, read N- to C-terminus: BAHD acyltransferase DCR (484 aa).

The Proton acceptor role is filled by histidine 168. The tract at residues 211–233 (LDLTAPKDPNETSNGEDAANPTV) is disordered. Aspartate 394 (proton acceptor) is an active-site residue. The segment at 452-484 (EEEEDDGKKLTNGNGHVNGNGNGYVNGNGNGFV) is disordered. Over residues 467-484 (HVNGNGNGYVNGNGNGFV) the composition is skewed to gly residues.

The protein belongs to the plant acyltransferase family. As to expression, expressed in root caps and lateral root emerging sites, in trichomes, in epidermis in stems, sepals and anther filaments, and in pollen grains and torpedo stage seeds.

The protein localises to the cytoplasm. The protein resides in the cytosol. Functionally, required for incorporation of 9(10),16-dihydroxy-hexadecanoic acid into cutin. The chain is BAHD acyltransferase DCR (DCR) from Arabidopsis thaliana (Mouse-ear cress).